The sequence spans 88 residues: Large ribosomal subunit protein uL23c (88 aa).

Belongs to the universal ribosomal protein uL23 family. As to quaternary structure, part of the 50S ribosomal subunit.

The protein localises to the plastid. The protein resides in the chloroplast. Functionally, binds to 23S rRNA. This chain is Large ribosomal subunit protein uL23c (rpl23), found in Spirogyra maxima (Green alga).